We begin with the raw amino-acid sequence, 210 residues long: Ribosomal RNA small subunit methyltransferase G (210 aa).

S-adenosyl-L-methionine-binding positions include Gly74, Phe79, 127 to 128 (IE), and Arg143.

This sequence belongs to the methyltransferase superfamily. RNA methyltransferase RsmG family.

The protein resides in the cytoplasm. It catalyses the reaction guanosine(527) in 16S rRNA + S-adenosyl-L-methionine = N(7)-methylguanosine(527) in 16S rRNA + S-adenosyl-L-homocysteine. In terms of biological role, specifically methylates the N7 position of guanine in position 527 of 16S rRNA. This chain is Ribosomal RNA small subunit methyltransferase G, found in Chelativorans sp. (strain BNC1).